Here is a 569-residue protein sequence, read N- to C-terminus: CTP synthase (569 aa).

The segment at 1-272 (MARPKNVKHI…DSRVLKKLGI (272 aa)) is amidoligase domain. Ser-18 is a CTP binding site. Ser-18 contributes to the UTP binding site. 19–24 (SLGKGI) provides a ligand contact to ATP. Tyr-59 is an L-glutamine binding site. Asp-76 contributes to the ATP binding site. Positions 76 and 146 each coordinate Mg(2+). CTP-binding positions include 153 to 155 (DIE), 193 to 198 (KTKPTQ), and Lys-229. Residues 193–198 (KTKPTQ) and Lys-229 each bind UTP. The 245-residue stretch at 299-543 (TIGICGKYTE…VAAAKDYARG (245 aa)) folds into the Glutamine amidotransferase type-1 domain. Gly-363 contacts L-glutamine. Residue Cys-390 is the Nucleophile; for glutamine hydrolysis of the active site. L-glutamine contacts are provided by residues 391–394 (LGMQ), Glu-414, and Arg-471. Residues His-516 and Glu-518 contribute to the active site.

The protein belongs to the CTP synthase family. Homotetramer.

It carries out the reaction UTP + L-glutamine + ATP + H2O = CTP + L-glutamate + ADP + phosphate + 2 H(+). The catalysed reaction is L-glutamine + H2O = L-glutamate + NH4(+). The enzyme catalyses UTP + NH4(+) + ATP = CTP + ADP + phosphate + 2 H(+). It participates in pyrimidine metabolism; CTP biosynthesis via de novo pathway; CTP from UDP: step 2/2. With respect to regulation, allosterically activated by GTP, when glutamine is the substrate; GTP has no effect on the reaction when ammonia is the substrate. The allosteric effector GTP functions by stabilizing the protein conformation that binds the tetrahedral intermediate(s) formed during glutamine hydrolysis. Inhibited by the product CTP, via allosteric rather than competitive inhibition. Catalyzes the ATP-dependent amination of UTP to CTP with either L-glutamine or ammonia as the source of nitrogen. Regulates intracellular CTP levels through interactions with the four ribonucleotide triphosphates. The protein is CTP synthase of Chlorobium chlorochromatii (strain CaD3).